The chain runs to 181 residues: Protein Syd (181 aa).

Belongs to the Syd family.

The protein resides in the cell inner membrane. Interacts with the SecY protein in vivo. May bind preferentially to an uncomplexed state of SecY, thus functioning either as a chelating agent for excess SecY in the cell or as a regulatory factor that negatively controls the translocase function. The chain is Protein Syd from Escherichia fergusonii (strain ATCC 35469 / DSM 13698 / CCUG 18766 / IAM 14443 / JCM 21226 / LMG 7866 / NBRC 102419 / NCTC 12128 / CDC 0568-73).